The sequence spans 482 residues: Rho GTPase-activating protein 15 (482 aa).

Phosphoserine is present on residues serine 51, serine 111, serine 205, serine 208, and serine 250. Residues 87 to 198 (MVEKEGYLQK…WFHAIKNAID (112 aa)) enclose the PH domain. Residues 288-477 (SHLHTVCERE…FMLTEYDKIF (190 aa)) form the Rho-GAP domain.

Its subcellular location is the cytoplasm. It localises to the membrane. GTPase activator for the Rho-type GTPases by converting them to an inactive GDP-bound state. Has activity toward RAC1. Overexpression results in an increase in actin stress fibers and cell contraction. This is Rho GTPase-activating protein 15 (Arhgap15) from Rattus norvegicus (Rat).